Here is a 406-residue protein sequence, read N- to C-terminus: Kelch domain-containing protein 2 (406 aa).

Kelch repeat units follow at residues 31-85 (ERSG…NTEG), 92-136 (SGSC…ERID), 148-207 (LGVW…AWSQ), 221-259 (HACATVGNKGFVFGGRYRDARMNDLHYLNLDTWEWNELI), 271-311 (HSLT…IQFN), and 322-359 (HTACASDEGEVIVFGGCANNLLVHHRAAHSNEVLIFSV).

As to quaternary structure, component of a CRL2(KLHDC2) E3 ubiquitin-protein ligase complex, also named ECS(KLHDC2) complex, composed of CUL2, Elongin BC (ELOB and ELOC), RBX1 and substrate-specific adapter KLHDC2. May form oligomers as a KLHDC2-ELOB-ELOC complex; this interaction is autoinhibitory for the E3 ligase complex as the substrate-binding site of KLHDC2 is blocked in the oligomer. Interacts with CREB3; interaction is direct and specific as it does not interact with CREB1, ATF4, ATF6, JUN, FOS, CEBPA or herpes simplex virus transactivator VP16. Post-translationally, autoubiquitinated by the CRL2(KLHDC2) E3 ligase complex.

The protein localises to the nucleus. The protein operates within protein modification; protein ubiquitination. Its function is as follows. Substrate-recognition component of a Cul2-RING (CRL2) E3 ubiquitin-protein ligase complex of the DesCEND (destruction via C-end degrons) pathway, which recognizes a C-degron located at the extreme C terminus of target proteins, leading to their ubiquitination and degradation. The C-degron recognized by the DesCEND pathway is usually a motif of less than ten residues and can be present in full-length proteins, truncated proteins or proteolytically cleaved forms. The CRL2(KLHDC2) complex specifically recognizes proteins with a diglycine (Gly-Gly) at the C-terminus, leading to their ubiquitination and degradation. The CRL2(KLHDC2) complex mediates ubiquitination and degradation of truncated SELENOK and SELENOS selenoproteins produced by failed UGA/Sec decoding, which end with a diglycine. The CRL2(KLHDC2) complex also recognizes proteolytically cleaved proteins ending with Gly-Gly, such as the N-terminal fragment of USP1, leading to their degradation. May also act as an indirect repressor of CREB3-mediated transcription by interfering with CREB3-DNA-binding. The sequence is that of Kelch domain-containing protein 2 from Rattus norvegicus (Rat).